The sequence spans 300 residues: Putative heme-binding peroxidase (300 aa).

Residue histidine 39 is the Proton acceptor of the active site. Disordered regions lie at residues 44–64 (YDKS…EAEG) and 116–135 (GRTD…LPDA). The span at 116–126 (GRTDFADDSRV) shows a compositional bias: basic and acidic residues. Residue histidine 163 coordinates heme b. Tryptophan 179 serves as the catalytic Tryptophan radical intermediate.

This sequence belongs to the peroxidase family. Cytochrome c peroxidase subfamily. The cofactor is heme b.

Functionally, destroys radicals which are normally produced within the cells and which are toxic to biological systems. The protein is Putative heme-binding peroxidase of Pyricularia oryzae (strain 70-15 / ATCC MYA-4617 / FGSC 8958) (Rice blast fungus).